A 109-amino-acid chain; its full sequence is Small ribosomal subunit protein uS15c (109 aa).

The protein belongs to the universal ribosomal protein uS15 family. As to quaternary structure, part of the 30S ribosomal subunit.

The protein localises to the plastid. It localises to the chloroplast. The polypeptide is Small ribosomal subunit protein uS15c (rps15-A) (Trachelium caeruleum (Blue throatwort)).